Here is a 187-residue protein sequence, read N- to C-terminus: Photosystem I assembly protein Ycf4 (187 aa).

The next 2 membrane-spanning stretches (helical) occupy residues 25–47 (YWWA…SSYL) and 62–84 (FVPQ…IYLW).

It belongs to the Ycf4 family.

Its subcellular location is the plastid. The protein resides in the chloroplast thylakoid membrane. In terms of biological role, seems to be required for the assembly of the photosystem I complex. In Mesostigma viride (Green alga), this protein is Photosystem I assembly protein Ycf4.